Reading from the N-terminus, the 160-residue chain is Transcription elongation factor GreA (160 aa).

The stretch at 12-76 (EGVKKLEEEL…QLENMLKNAS (65 aa)) forms a coiled coil.

This sequence belongs to the GreA/GreB family.

In terms of biological role, necessary for efficient RNA polymerase transcription elongation past template-encoded arresting sites. The arresting sites in DNA have the property of trapping a certain fraction of elongating RNA polymerases that pass through, resulting in locked ternary complexes. Cleavage of the nascent transcript by cleavage factors such as GreA or GreB allows the resumption of elongation from the new 3'terminus. GreA releases sequences of 2 to 3 nucleotides. The sequence is that of Transcription elongation factor GreA from Clostridium botulinum (strain Hall / ATCC 3502 / NCTC 13319 / Type A).